Here is a 139-residue protein sequence, read N- to C-terminus: LIKQPVVGTTHVEMPRNEVLEQHLTSHGAQIAGGGAAGDYFKSPTSARTLIPLTASCLRPDGVFQLGGGSRSSFNPLQTDFAFHALPSRPRHGGIGSRQFVEEFVPAVYLNPYSGPPDSYPDQFIRHYNVYSNSVSGYS.

The propeptide occupies 35–69; that stretch reads GAAGDYFKSPTSARTLIPLTASCLRPDGVFQLGGG.

Belongs to the adenoviridae hexon-linking protein family. In terms of assembly, interacts with the peripentonal hexons as well as the hexons in the facets. Part of a complex composed of the core-capsid bridging protein, the endosome lysis protein VI and the hexon-linking protein VIII; these interactions bridge the virus core to the capsid. Cleaved by the viral protease during virion maturation. May cause the middle segment to be shed from the capsid.

The protein localises to the host nucleus. Its subcellular location is the virion. Structural component of the virion that acts as a cement protein on the capsid interior and which glue the peripentonal hexons and group-of-nine hexons together. The protein is Pre-hexon-linking protein VIII of Bovine adenovirus B serotype 3 (BAdV-3).